Consider the following 33-residue polypeptide: Neutrophil defensin 4 (33 aa).

Cystine bridges form between Cys-3–Cys-31, Cys-5–Cys-20, and Cys-10–Cys-30.

It belongs to the alpha-defensin family. Post-translationally, HANP-2 could be a product of proteolytic N-terminal amino acid removal from HANP-4.

Its subcellular location is the secreted. Bactericidal activity, greater against Gram-positive bacteria. Low anti-fungi activity. This Mesocricetus auratus (Golden hamster) protein is Neutrophil defensin 4.